Consider the following 181-residue polypeptide: Bradykinin potentiating and C-type natriuretic peptides (181 aa).

The signal sequence occupies residues 1–23 (MFVSRLAASGLLLLALLAVSLDG). Positions 24–27 (KPLQ) are excised as a propeptide. Q28 and Q31 each carry pyrrolidone carboxylic acid. Positions 41–43 (LVV) are excised as a propeptide. Q44 carries the pyrrolidone carboxylic acid modification. Positions 50 to 52 (TQL) are excised as a propeptide. Q53 carries the pyrrolidone carboxylic acid modification. A propeptide spanning residues 59–159 (AGGTTALREE…ARRLKGLAKK (101 aa)) is cleaved from the precursor. Residues 74 to 150 (EAALDTPPAG…GGGCGGGGGA (77 aa)) form a disordered region. Over residues 104-114 (SKGASATSAAS) the composition is skewed to low complexity. Positions 140–150 (AGGGCGGGGGA) are enriched in gly residues. A disulfide bridge links C165 with C181.

This sequence in the N-terminal section; belongs to the bradykinin-potentiating peptide family. It in the C-terminal section; belongs to the natriuretic peptide family. In terms of tissue distribution, venom gland.

The protein resides in the secreted. In terms of biological role, bradykinin-potentiating peptide both inhibits the activity of the angiotensin-converting enzyme (ACE) and enhances the action of bradykinin by inhibiting the peptidases that inactivate it. It acts as an indirect hypotensive agent. Synthetic Cdt1a, Cdt1b and the short hexapeptide Cdt3 are able to potentiate the hypotensive effect mediated by Bk on the blood pressure of anesthetized rats. Has a vasorelaxant activity in rat aortic strips and a diuretic potency in anesthetized rats. May act by activating natriuretic receptors (NPR1 and/or NPR2). The protein is Bradykinin potentiating and C-type natriuretic peptides of Crotalus durissus terrificus (South American rattlesnake).